The chain runs to 155 residues: 6,7-dimethyl-8-ribityllumazine synthase (155 aa).

Residues Phe24, 58-60, and 82-84 each bind 5-amino-6-(D-ribitylamino)uracil; these read AFE and AVI. 87–88 contributes to the (2S)-2-hydroxy-3-oxobutyl phosphate binding site; it reads ST. The active-site Proton donor is His90. Phe115 contacts 5-amino-6-(D-ribitylamino)uracil. Arg129 contacts (2S)-2-hydroxy-3-oxobutyl phosphate.

The protein belongs to the DMRL synthase family.

It carries out the reaction (2S)-2-hydroxy-3-oxobutyl phosphate + 5-amino-6-(D-ribitylamino)uracil = 6,7-dimethyl-8-(1-D-ribityl)lumazine + phosphate + 2 H2O + H(+). It functions in the pathway cofactor biosynthesis; riboflavin biosynthesis; riboflavin from 2-hydroxy-3-oxobutyl phosphate and 5-amino-6-(D-ribitylamino)uracil: step 1/2. In terms of biological role, catalyzes the formation of 6,7-dimethyl-8-ribityllumazine by condensation of 5-amino-6-(D-ribitylamino)uracil with 3,4-dihydroxy-2-butanone 4-phosphate. This is the penultimate step in the biosynthesis of riboflavin. The protein is 6,7-dimethyl-8-ribityllumazine synthase of Acetivibrio thermocellus (strain ATCC 27405 / DSM 1237 / JCM 9322 / NBRC 103400 / NCIMB 10682 / NRRL B-4536 / VPI 7372) (Clostridium thermocellum).